Consider the following 257-residue polypeptide: Methylthioribulose-1-phosphate dehydratase (257 aa).

C107 is a substrate binding site. Positions 125 and 127 each coordinate Zn(2+). E148 functions as the Proton donor/acceptor in the catalytic mechanism. Residue H210 coordinates Zn(2+).

It belongs to the aldolase class II family. MtnB subfamily. It depends on Zn(2+) as a cofactor.

The protein resides in the cytoplasm. It carries out the reaction 5-(methylsulfanyl)-D-ribulose 1-phosphate = 5-methylsulfanyl-2,3-dioxopentyl phosphate + H2O. The protein operates within amino-acid biosynthesis; L-methionine biosynthesis via salvage pathway; L-methionine from S-methyl-5-thio-alpha-D-ribose 1-phosphate: step 2/6. Its function is as follows. Catalyzes the dehydration of methylthioribulose-1-phosphate (MTRu-1-P) into 2,3-diketo-5-methylthiopentyl-1-phosphate (DK-MTP-1-P). The chain is Methylthioribulose-1-phosphate dehydratase from Lachancea thermotolerans (strain ATCC 56472 / CBS 6340 / NRRL Y-8284) (Yeast).